The sequence spans 62 residues: Alpha-toxin Tf4 (62 aa).

Positions 2 to 62 constitute an LCN-type CS-alpha/beta domain; it reads KEGYPADSKG…SVWDSATNKC (61 aa). 4 disulfides stabilise this stretch: C12-C62, C16-C38, C24-C43, and C28-C45. Position 62 is a cysteine amide (C62).

As to expression, expressed by the venom gland.

The protein localises to the secreted. Functionally, alpha toxins bind voltage-independently at site-3 of sodium channels (Nav) and inhibit the inactivation of the activated channels, thereby blocking neuronal transmission. This toxin is toxic to frogs but non-toxic to insect larvae (T.molitor), mammals (rats) and crustaceans (crabs) at the doses assayed. The polypeptide is Alpha-toxin Tf4 (Tityus fasciolatus (Central Brazilian scorpion)).